The chain runs to 358 residues: tRNA-specific 2-thiouridylase MnmA (358 aa).

Residues 6 to 13 (ALSGGVDS) and methionine 32 contribute to the ATP site. The active-site Nucleophile is the cysteine 103. Cysteines 103 and 201 form a disulfide. Residue glycine 127 participates in ATP binding. Positions 151 to 153 (KDQ) are interaction with tRNA. Cysteine 201 functions as the Cysteine persulfide intermediate in the catalytic mechanism.

The protein belongs to the MnmA/TRMU family.

It localises to the cytoplasm. The enzyme catalyses S-sulfanyl-L-cysteinyl-[protein] + uridine(34) in tRNA + AH2 + ATP = 2-thiouridine(34) in tRNA + L-cysteinyl-[protein] + A + AMP + diphosphate + H(+). Functionally, catalyzes the 2-thiolation of uridine at the wobble position (U34) of tRNA, leading to the formation of s(2)U34. This is tRNA-specific 2-thiouridylase MnmA from Thermotoga maritima (strain ATCC 43589 / DSM 3109 / JCM 10099 / NBRC 100826 / MSB8).